A 507-amino-acid chain; its full sequence is ATP synthase subunit alpha (507 aa).

Position 168 to 175 (168 to 175) interacts with ATP; that stretch reads GDRQTGKT.

Belongs to the ATPase alpha/beta chains family. In terms of assembly, F-type ATPases have 2 components, CF(1) - the catalytic core - and CF(0) - the membrane proton channel. CF(1) has five subunits: alpha(3), beta(3), gamma(1), delta(1), epsilon(1). CF(0) has three main subunits: a(1), b(2) and c(9-12). The alpha and beta chains form an alternating ring which encloses part of the gamma chain. CF(1) is attached to CF(0) by a central stalk formed by the gamma and epsilon chains, while a peripheral stalk is formed by the delta and b chains.

It localises to the cell membrane. The enzyme catalyses ATP + H2O + 4 H(+)(in) = ADP + phosphate + 5 H(+)(out). Functionally, produces ATP from ADP in the presence of a proton gradient across the membrane. The alpha chain is a regulatory subunit. This is ATP synthase subunit alpha from Mesomycoplasma hyopneumoniae (strain 7448) (Mycoplasma hyopneumoniae).